Reading from the N-terminus, the 124-residue chain is MSTTNDNTTMQRLMITDMRPLSMDSIITSLTKEIITHKFIYLINNECIVRKLDERQATFTFLVNYEMKLLHKVGSTKYKKYTEYNTKYGTFPMPIFINHGGFLECIGIKPTKHTPIIYKYDLNP.

The DLNP; interaction with MAP1B motif lies at 121–124; it reads DLNP.

It belongs to the pneumovirus non-structural protein 2 family. In terms of assembly, monomer (instable). Homomultimer. Heteromultimer with NS1. Interacts with host RIGI (via N-terminus); this interaction prevents host signaling pathway involved in interferon production. Interacts with host MAP1B/microtubule-associated protein 1B.

The protein localises to the host mitochondrion. Functionally, plays a major role in antagonizing the type I IFN-mediated antiviral response. Acts cooperatively with NS1 to repress activation and nuclear translocation of host IFN-regulatory factor IRF3. Interacts with the host cytoplasmic sensor of viral nucleic acids RIGI and prevents the interaction with its downstream partner MAVS. Together with NS2, participates in the proteasomal degradation of host STAT2, IRF3, IRF7, TBK1 and RIGI through a NS-degradasome involving CUL2 and Elongin-C. The degradasome requires an intact mitochondrial MAVS. Induces host SOCS1 expression. Induces activation of NF-kappa-B. Suppresses premature apoptosis by an NF-kappa-B-dependent, interferon-independent mechanism promoting continued viral replication. The sequence is that of Non-structural protein 2 (1B) from Human respiratory syncytial virus B (strain B1).